The primary structure comprises 366 residues: Chorismate synthase (366 aa).

The NADP(+) site is built by Arg48 and Arg54. FMN-binding positions include Arg125–Ser127, Asn237–Ala238, Gly277, Lys292–Ser296, and Arg318.

Belongs to the chorismate synthase family. In terms of assembly, homotetramer. The cofactor is FMNH2.

It carries out the reaction 5-O-(1-carboxyvinyl)-3-phosphoshikimate = chorismate + phosphate. It participates in metabolic intermediate biosynthesis; chorismate biosynthesis; chorismate from D-erythrose 4-phosphate and phosphoenolpyruvate: step 7/7. Its function is as follows. Catalyzes the anti-1,4-elimination of the C-3 phosphate and the C-6 proR hydrogen from 5-enolpyruvylshikimate-3-phosphate (EPSP) to yield chorismate, which is the branch point compound that serves as the starting substrate for the three terminal pathways of aromatic amino acid biosynthesis. This reaction introduces a second double bond into the aromatic ring system. This is Chorismate synthase from Acidovorax sp. (strain JS42).